The following is a 144-amino-acid chain: Transcription antitermination protein NusB (144 aa).

It belongs to the NusB family.

Its function is as follows. Involved in transcription antitermination. Required for transcription of ribosomal RNA (rRNA) genes. Binds specifically to the boxA antiterminator sequence of the ribosomal RNA (rrn) operons. The polypeptide is Transcription antitermination protein NusB (Paraburkholderia xenovorans (strain LB400)).